We begin with the raw amino-acid sequence, 213 residues long: Ribonuclease HII (213 aa).

An RNase H type-2 domain is found at 2–213 (GRVAGIDEAG…KEWATWKRLR (212 aa)). Positions 8, 9, and 113 each coordinate a divalent metal cation.

It belongs to the RNase HII family. The cofactor is Mn(2+). Requires Mg(2+) as cofactor.

It is found in the cytoplasm. The catalysed reaction is Endonucleolytic cleavage to 5'-phosphomonoester.. Its function is as follows. Endonuclease that specifically degrades the RNA of RNA-DNA hybrids. The polypeptide is Ribonuclease HII (Thermofilum pendens (strain DSM 2475 / Hrk 5)).